The chain runs to 219 residues: MEYLSAFNPNGLLRSVSTVSSELSRRVWNSAPPPQRPFRVCDHKRTVRKGLTAASLQELLDKVLETLLLRGVLTLVLEEDGTAVDSEDFFQLLEDDTCLMVLEQGQSWSPKSGMLSYGLGREKPKHSKDIARITFDVYKQNPRDLFGSLNVKATFYGLYSMSCDFQGVGPKRVLRELLRWTSSLLQGLGHMLLGISSTLRHVVEGADRWQWHGQRHLHS.

Thr18 bears the Phosphothreonine mark. The CIDE-N domain occupies 34–110 (PQRPFRVCDH…VLEQGQSWSP (77 aa)).

It belongs to the CIDE family. As to quaternary structure, interacts with DFFA. Interacts with DFFB; inhibited by DFFB. Interacts with APOB. Interacts with PREB/SEC12; facilitating loading of SCAP-SREBP into COPII vesicles. As to expression, highly enriched in the liver.

The protein localises to the lipid droplet. The protein resides in the endoplasmic reticulum membrane. Its subcellular location is the golgi apparatus. It localises to the cytoplasmic vesicle. It is found in the COPI-coated vesicle. Lipid transferase specifically expressed in hepatocytes, which promotes unilocular lipid droplet formation by mediating lipid droplet fusion. Lipid droplet fusion promotes their enlargement, restricting lipolysis and favoring lipid storage. Localizes on the lipid droplet surface, at focal contact sites between lipid droplets, and mediates atypical lipid droplet fusion by promoting directional net neutral lipid transfer from the smaller to larger lipid droplets. The transfer direction may be driven by the internal pressure difference between the contacting lipid droplet pair. Promotes lipid exchange and lipid droplet fusion in both small and large lipid droplet-containing hepatocytes. In addition to its role in lipid droplet fusion, also involved in cytoplasmic vesicle biogenesis and transport. Required for very-low-density lipoprotein (VLDL) lipidation and maturation. Probably involved in the biogenesis of VLDL transport vesicles by forming a COPII vesicle coat and facilitating the formation of endoplasmic reticulum-derived large vesicles. Also involved in sterol-regulated export of the SCAP-SREBP complex, composed of SCAP, SREBF1/SREBP1 and SREBF2/SREBP2, by promoting loading of SCAP-SREBP into COPII vesicles. May also activate apoptosis. This is Lipid transferase CIDEB from Mus musculus (Mouse).